The sequence spans 400 residues: LIM homeobox transcription factor 1-beta.1 (400 aa).

2 consecutive LIM zinc-binding domains span residues 54 to 113 and 114 to 175; these read AVCE…LFAA and KCSG…EKDL. The tract at residues 175–228 is disordered; it reads LLSSGSPDDSDSVKSDDEEGDVKPGKGRVNQGKGSDDGKDPRRPKRPRTILTTQ. The segment at residues 218–277 is a DNA-binding region (homeobox); the sequence is PKRPRTILTTQQRRAFKASFEVSSKPCRKVRETLAAETGLSVRVVQVWFQNQRAKIKKLA.

In terms of tissue distribution, shows a temporal expression pattern in three main areas: neural, kidney and limbs. From stage 13 onwards, expressed in regions of the nervous system including the placodes and otic vesicles, eye, specific sets of neurons, and in discreet regions of the neural tube. From stage 13, also expressed in the presumptive pronephros, and from stage 27 expression is predominant in the capsule of the pronephric glomus. Also expressed in the developing forelimbs and hindlimbs. In metamorphosing tadpoles, expressed in the eye, brain, muscle and mesonephric kidney.

It localises to the nucleus. In terms of biological role, required for early specification of the kidney glomus, lying upstream of wt1 in the pathway controlling glomus differentiation. The balance in levels and expression patterns of binding partners such as lhx1/lim-1 influences differentiation into glomus or tubule derivatives. Involved in specification of serotonergic neurons. In Xenopus laevis (African clawed frog), this protein is LIM homeobox transcription factor 1-beta.1.